Reading from the N-terminus, the 230-residue chain is Movement and silencing protein TGBp1 (230 aa).

In terms of domain architecture, (+)RNA virus helicase ATP-binding spans 1–114; it reads MDSIINALTS…GLALRPHFIK (114 aa). The (+)RNA virus helicase C-terminal domain maps to 115–230; sequence SVSHRLCPAT…VRSPPPHPSH (116 aa).

Belongs to the Tymovirales TGBp1 protein family. As to quaternary structure, homodimer and homooligomer. Interacts with capsid protein. Interacts with host AGO1; this interaction targets the host protein for degradation, thereby suppressing the antiviral RNA silencing.

It localises to the host cytoplasm. In terms of biological role, transports viral genome to neighboring plant cells directly through plasmosdesmata, without any budding. The movement protein allows efficient cell to cell propagation, by bypassing the host cell wall barrier. Increases plasmodesma size exclusion limit. Acts as a suppressor of RNA-mediated gene silencing, also known as post-transcriptional gene silencing (PTGS), a mechanism of plant viral defense that limits the accumulation of viral RNAs. This is Movement and silencing protein TGBp1 from Plantago asiatica (P1AMV).